A 347-amino-acid chain; its full sequence is NADH-ubiquinone oxidoreductase chain 2 (347 aa).

The next 10 helical transmembrane spans lie at 3–23, 25–45, 66–86, 111–131, 149–169, 178–198, 201–221, 237–257, 274–294, and 325–345; these read PPILIAILATVMTGTMIVMLS, HWLLIWIGFEMNMLAIIPILM, ASMLLMMGVTINLLYSGQWMI, FHFWVPEVTQGISLSSGMILL, INTDLMTLVALASVLVGGWGG, IMAYSSIAHMGWMAAIIIYNP, MFLNLSLYILMTLSTFMLFML, IPLIASTILTLMLSLGGLPPL, DMIVVPTLMAITALLNLYFYM, and LLPPLIITSTMLLPIMPMMSI.

It belongs to the complex I subunit 2 family. In terms of assembly, core subunit of respiratory chain NADH dehydrogenase (Complex I) which is composed of 45 different subunits. Interacts with TMEM242.

The protein resides in the mitochondrion inner membrane. The enzyme catalyses a ubiquinone + NADH + 5 H(+)(in) = a ubiquinol + NAD(+) + 4 H(+)(out). Core subunit of the mitochondrial membrane respiratory chain NADH dehydrogenase (Complex I) which catalyzes electron transfer from NADH through the respiratory chain, using ubiquinone as an electron acceptor. Essential for the catalytic activity and assembly of complex I. This is NADH-ubiquinone oxidoreductase chain 2 from Vulpes vulpes (Red fox).